The chain runs to 142 residues: Rhinocerosin (142 aa).

A signal peptide spans 1-16; that stretch reads MMKLYIVFGFIAFSAA. Residues 17-70 constitute a propeptide that is removed on maturation; it reads YVVPEGYYEPEYYPADGYESERVARASPAELIFDEDLADEPEVEEPQYYIRTRR. The tract at residues 72-96 is disordered; it reads LQPGAPNFPMPGSQLPTSITSNIEK. Over residues 85 to 96 the composition is skewed to polar residues; sequence QLPTSITSNIEK.

It belongs to the coleoptericin family. In terms of tissue distribution, strongly expressed in the fat body and the Malpighian tubules, and weakly expressed in hemocytes and midgut.

Its subcellular location is the secreted. Has strong antibacterial activity against E.coli, Streptococcus pyogenes, Staphylococcus aureus but not against Pseudomonas aeruginosa. The sequence is that of Rhinocerosin from Oryctes rhinoceros (Coconut rhinoceros beetle).